Consider the following 186-residue polypeptide: Elongation factor P (186 aa).

It belongs to the elongation factor P family.

Its subcellular location is the cytoplasm. It participates in protein biosynthesis; polypeptide chain elongation. Functionally, involved in peptide bond synthesis. Stimulates efficient translation and peptide-bond synthesis on native or reconstituted 70S ribosomes in vitro. Probably functions indirectly by altering the affinity of the ribosome for aminoacyl-tRNA, thus increasing their reactivity as acceptors for peptidyl transferase. The polypeptide is Elongation factor P (Polynucleobacter necessarius subsp. necessarius (strain STIR1)).